The chain runs to 526 residues: Probable inorganic phosphate transporter 1-3 (526 aa).

Residues 1–21 (MADGQLKVLTTLDHARTQWYH) lie on the Cytoplasmic side of the membrane. A helical transmembrane segment spans residues 22-42 (FMAIVIAGMGFFTDAYDLFCI). Residues 43–70 (SLVSKLLGRIYYTDLAGDNPGSLPPNVS) are Extracellular-facing. The chain crosses the membrane as a helical span at residues 71 to 91 (AAVNGVALCGTLAGQLFFGWL). At 92-99 (GDKLGRKS) the chain is on the cytoplasmic side. The chain crosses the membrane as a helical span at residues 100 to 120 (VYGFTLVLMVVCSVASGLSFG). At 121–124 (RTAK) the chain is on the extracellular side. The chain crosses the membrane as a helical span at residues 125 to 145 (GVVATLCFFRFWLGFGIGGDY). Over 146–163 (PLSATIMSEYANKRTRGA) the chain is Cytoplasmic. Residues 164-184 (FIAAVFAMQGFGILFGAIVAL) traverse the membrane as a helical segment. Over 185–211 (VVSAGFRNAYPAPSYADGRAASLVPEA) the chain is Extracellular. Residues 212 to 232 (DYVWRIILMFGTVPAALTYYW) traverse the membrane as a helical segment. Residues 233–294 (RMKMPETARY…GLFSRQFVRR (62 aa)) are Cytoplasmic-facing. The chain crosses the membrane as a helical span at residues 295–315 (HGVHLVATTSTWFLLDIAFYS). The Extracellular segment spans residues 316 to 349 (QNLFQKDIFSKVGWIPPARTMNAVEEVFRIARAQ). Residues 350–370 (ALIALCGTIPGYWFTVAFIDV) traverse the membrane as a helical segment. The Cytoplasmic segment spans residues 371–373 (AGR). The helical transmembrane segment at 374–394 (FAIQLMGFAMMTVFMLGLAAP) threads the bilayer. The Extracellular segment spans residues 395–407 (YHHWTTPGNHTGF). A helical membrane pass occupies residues 408-428 (VVMYGFTFFFANFGPNATTFI). Residues 429–444 (VPAEIYPARLRSTCHG) lie on the Cytoplasmic side of the membrane. The helical transmembrane segment at 445 to 465 (ISAAAGKAGAIVGAFGFLYAA) threads the bilayer. Topologically, residues 466–483 (QDPHKPEAGYKPGIGIRN) are extracellular. The chain crosses the membrane as a helical span at residues 484 to 504 (ALFVLAGTNFLGMLMTLLVPE). Topologically, residues 505–526 (SKGMSLEEVSKENVADDEEATA) are cytoplasmic.

Belongs to the major facilitator superfamily. Phosphate:H(+) symporter (TC 2.A.1.9) family. In terms of tissue distribution, expressed at low levels in roots.

The protein resides in the membrane. Its function is as follows. High-affinity transporter for external inorganic phosphate. In Oryza sativa subsp. japonica (Rice), this protein is Probable inorganic phosphate transporter 1-3 (PHT1-3).